The following is an 820-amino-acid chain: Pentatricopeptide repeat-containing protein At3g22150, chloroplastic (820 aa).

Residues 1–42 (MAGSALPLPPPPPLSLQSPSQNQTRHSSTFSPPTLTPQTPSI) form a disordered region. The transit peptide at 1 to 50 (MAGSALPLPPPPPLSLQSPSQNQTRHSSTFSPPTLTPQTPSIRSRLSKIC) directs the protein to the chloroplast. Residues 22–42 (NQTRHSSTFSPPTLTPQTPSI) show a composition bias toward polar residues. PPR repeat units lie at residues 69–99 (TTVL…MKKT), 106–136 (DAYT…LIRC), 141–177 (SRVV…MRRK), 178–212 (NVVA…EVKP), 213–247 (SPVS…GDEY), 250–284 (DLFV…NIEV), 285–316 (WNTM…EIVS), 317–347 (DEVT…VSKN), 352–382 (PIVI…MRER), 383–417 (DVVS…GFKI), 418–452 (DYIT…GIQF), 485–519 (DQAT…NIRP), 520–550 (NAVT…SIRQ), 555–585 (NVFV…TKER), 586–620 (NSVT…GIKP), 621–651 (DAIT…MREV), and 657–691 (SSEH…GNIA). Positions 693–770 (LWGSLLGSCK…EVGRSGIEIA (78 aa)) are type E motif. The tract at residues 771-801 (GYVNCFVSRDQEHPHSSEIYDVIDGLAKDMR) is type E(+) motif.

It belongs to the PPR family. PCMP-E subfamily.

It localises to the plastid. It is found in the chloroplast. The sequence is that of Pentatricopeptide repeat-containing protein At3g22150, chloroplastic (PCMP-E95) from Arabidopsis thaliana (Mouse-ear cress).